A 245-amino-acid polypeptide reads, in one-letter code: Orotidine 5'-phosphate decarboxylase (245 aa).

Residues Asp-22, Lys-44, Asp-71–Thr-80, Thr-131, Arg-192, Gln-201, Gly-221, and Arg-222 each bind substrate. The active-site Proton donor is the Lys-73.

This sequence belongs to the OMP decarboxylase family. Type 1 subfamily. Homodimer.

The enzyme catalyses orotidine 5'-phosphate + H(+) = UMP + CO2. The protein operates within pyrimidine metabolism; UMP biosynthesis via de novo pathway; UMP from orotate: step 2/2. In terms of biological role, catalyzes the decarboxylation of orotidine 5'-monophosphate (OMP) to uridine 5'-monophosphate (UMP). The protein is Orotidine 5'-phosphate decarboxylase of Salmonella typhi.